The primary structure comprises 276 residues: Large ribosomal subunit protein uL2 (276 aa).

The tract at residues valine 223 to arginine 276 is disordered. Residues lysine 251 to asparagine 260 show a composition bias toward basic residues.

Belongs to the universal ribosomal protein uL2 family. In terms of assembly, part of the 50S ribosomal subunit. Forms a bridge to the 30S subunit in the 70S ribosome.

One of the primary rRNA binding proteins. Required for association of the 30S and 50S subunits to form the 70S ribosome, for tRNA binding and peptide bond formation. It has been suggested to have peptidyltransferase activity; this is somewhat controversial. Makes several contacts with the 16S rRNA in the 70S ribosome. The chain is Large ribosomal subunit protein uL2 from Hyphomonas neptunium (strain ATCC 15444).